The primary structure comprises 77 residues: uncharacterized protein (77 aa).

Composition is skewed to basic and acidic residues over residues 1–24 and 37–58; these read CPVAEEHFLVPAHEARGTQGEDQR and EGPKLGEERPKPEAGALEERGP. A disordered region spans residues 1 to 77; that stretch reads CPVAEEHFLV…RHGPKRKPAK (77 aa). Residues 66-77 show a composition bias toward basic residues; the sequence is RPRHGPKRKPAK.

This is an uncharacterized protein from Macaca fascicularis (Crab-eating macaque).